A 220-amino-acid chain; its full sequence is Ribosomal RNA small subunit methyltransferase Nep1 (220 aa).

S-adenosyl-L-methionine contacts are provided by residues Gly178, Gly183, and 196-201 (LYREPL).

This sequence belongs to the class IV-like SAM-binding methyltransferase superfamily. RNA methyltransferase NEP1 family. Homodimer.

It catalyses the reaction a pseudouridine in rRNA + S-adenosyl-L-methionine = an N(1)-methylpseudouridine in rRNA + S-adenosyl-L-homocysteine + H(+). Functionally, methyltransferase involved in ribosomal biogenesis. Specifically catalyzes the N1-methylation of the pseudouridine corresponding to position 914 in M.jannaschii 16S rRNA. The sequence is that of Ribosomal RNA small subunit methyltransferase Nep1 from Thermococcus kodakarensis (strain ATCC BAA-918 / JCM 12380 / KOD1) (Pyrococcus kodakaraensis (strain KOD1)).